The chain runs to 3010 residues: Genome polyprotein (3010 aa).

Ser2 bears the N-acetylserine; by host mark. The interaction with STAT1 stretch occupies residues 2 to 23 (STNPKPQRKTKRNTNRRPQDVK). Residues 2 to 58 (STNPKPQRKTKRNTNRRPQDVKFPGGGQIVGGVYLLPRRGPRLGVRATRKTSERSQP) are interaction with EIF2AK2/PKR. The interval 2–59 (STNPKPQRKTKRNTNRRPQDVKFPGGGQIVGGVYLLPRRGPRLGVRATRKTSERSQPR) is interaction with DDX3X. The segment at 2–75 (STNPKPQRKT…PKARQPEGRA (74 aa)) is disordered. Residues 2–168 (STNPKPQRKT…EDGVNYATGN (167 aa)) are Cytoplasmic-facing. 2 consecutive short sequence motifs (nuclear localization signal) follow at residues 5–13 (PKPQRKTKR) and 38–43 (PRRGPR). The span at 7–16 (PQRKTKRNTN) shows a compositional bias: basic residues. Positions 32 to 47 (GGVYLLPRRGPRLGVR) are enriched in low complexity. Ser53 is modified (phosphoserine; by host). 2 short sequence motifs (nuclear localization signal) span residues 58-64 (PRGRRQP) and 66-71 (PKARQP). Ser99 bears the Phosphoserine; by host mark. The tract at residues 112–152 (PRRRSRNLGKVIDTLTCGFADLMGYIPLVGAPLGGVARALA) is important for endoplasmic reticulum and mitochondrial localization. Phosphoserine; by host PKA is present on Ser116. Positions 122 to 173 (VIDTLTCGFADLMGYIPLVGAPLGGVARALAHGVRVVEDGVNYATGNLPGCS) are interaction with APOA2. The tract at residues 164 to 167 (YATG) is important for lipid droplets localization. Residues 169-189 (LPGCSFSIFLLALLSCLTIPA) form a helical membrane-spanning segment. A propeptide spans 178 to 191 (LLALLSCLTIPASA) (ER anchor for the core protein, removed in mature form by host signal peptidase). At 190 to 358 (SAYEVRNVSG…AGAHWGVLAG (169 aa)) the chain is on the lumenal side. N-linked (GlcNAc...) asparagine; by host glycans are attached at residues Asn196, Asn209, Asn234, and Asn250. Positions 265–296 (LVGAAAFCSAMYVGDLCGSVFLVSQLFTFSPR) are important for fusion. A glycan (N-linked (GlcNAc...) asparagine; by host) is linked at Asn305. The helical transmembrane segment at 359-379 (LAYYSMVGNWAKVLIVMLLFA) threads the bilayer. The Lumenal segment spans residues 380–725 (GVDGETRVTG…WDYIVILFLL (346 aa)). Residues 385–411 (TRVTGGQIARNAYSLTTLFSSGSAQNI) form an HVR1 region. 4 N-linked (GlcNAc...) (high mannose) asparagine; by host glycosylation sites follow: Asn417, Asn423, Asn430, and Asn448. Intrachain disulfides connect Cys429-Cys552, Cys452-Cys459, Cys486-Cys494, and Cys503-Cys508. Residues 474–479 (YAEQGG) are HVR2. A CD81-binding 1 region spans residues 480–493 (QDQRPYCWHYAPKP). N-linked (GlcNAc...) (high mannose) asparagine; by host glycosylation occurs at Asn532. Asn540 is a glycosylation site (N-linked (GlcNAc...) asparagine; by host). Positions 544–551 (PPQGNWFG) are CD81-binding 2. N-linked (GlcNAc...) (high mannose) asparagine; by host glycosylation is present at Asn556. Cys564 and Cys569 form a disulfide bridge. Asn576 carries N-linked (GlcNAc...) (high mannose) asparagine; by host glycosylation. 3 cysteine pairs are disulfide-bonded: Cys581–Cys585, Cys597–Cys620, and Cys607–Cys644. Residues Asn623 and Asn645 are each glycosylated (N-linked (GlcNAc...) (high mannose) asparagine; by host). Cysteines 652 and 677 form a disulfide. The interval 660–671 (LELSPLLLSTTE) is PKR/eIF2-alpha phosphorylation homology domain (PePHD). Residues 726 to 746 (LADARVCACLWMMLLIAQAEA) traverse the membrane as a helical segment. Residues 747 to 757 (ALENLVVLNAA) lie on the Lumenal side of the membrane. The chain crosses the membrane as a helical span at residues 758–778 (SVAGAHGILSFLVFFCAAWYI). Residues 779-781 (KGK) are Cytoplasmic-facing. Residues 782-803 (LVPGAAYAFYGVWPLLLLLLAL) form a helical membrane-spanning segment. The Lumenal segment spans residues 804 to 813 (PPRAYAMERE). A helical membrane pass occupies residues 814-834 (MAASCGGAVFVGLVLLTLSPY). The Cytoplasmic segment spans residues 835–838 (YKEF). Residues 839–859 (LARLIWWLQYFITRAEAHLQV) traverse the membrane as a helical segment. The Lumenal segment spans residues 860–881 (WIPPLNIRGGRDAIILLACVVH). Residues 882–902 (PELIFDITKLLLAILGPLMVL) form a helical membrane-spanning segment. One can recognise a Peptidase C18 domain in the interval 903–1026 (QASITQVPYF…SLEGQGWRLL (124 aa)). Topologically, residues 903–1657 (QASITQVPYF…CMSADLEVVT (755 aa)) are cytoplasmic. Residues 904–1206 (ASITQVPYFV…PVESMETTMR (303 aa)) form a protease NS2-3 region. The S-palmitoyl cysteine; by host moiety is linked to residue Cys922. An interaction with host SCPS1 region spans residues 929–949 (AGGHYVQMAFVKLTALTGTYV). Active-site for protease NS2 activity; shared with dimeric partner residues include His952, Glu972, and Cys993. The Peptidase S29 domain occupies 1027–1208 (APITAYSQQT…ESMETTMRSP (182 aa)). Residues His1083 and Asp1107 each act as charge relay system; for serine protease NS3 activity in the active site. Zn(2+) is bound by residues Cys1123 and Cys1125. Ser1165 acts as the Charge relay system; for serine protease NS3 activity in catalysis. Positions 1171 and 1175 each coordinate Zn(2+). The Helicase ATP-binding domain maps to 1217-1369 (PAVPQTFQVA…PNIEEVALSN (153 aa)). Residue 1230-1237 (APTGSGKS) participates in ATP binding. Positions 1237 and 1317 each coordinate Mg(2+). Residues 1316 to 1319 (DECH) carry the DECH box motif. An RNA-binding region spans residues 1486–1497 (QRRGRTGRGRRG). The chain crosses the membrane as a helical span at residues 1658–1678 (STWVLVGGVLAALAAYCLTTG). An NS3-binding region spans residues 1679-1690 (SVVIVGRIILSG). Residues 1679–1805 (SVVIVGRIIL…SITSPLSTQN (127 aa)) are Cytoplasmic-facing. The chain crosses the membrane as a helical span at residues 1806 to 1824 (TLLFNIWGGWVAAQLAPPS). Residues 1825–1828 (AASA) are Lumenal-facing. A helical transmembrane segment spans residues 1829-1849 (FVGAGIAGAAVGSIGLGKVLV). Asp1850 is a topological domain (cytoplasmic). Residues 1851–1871 (ILAGYGAGVAGALVAFKIMSG) traverse the membrane as a helical segment. The Lumenal segment spans residues 1872 to 1881 (EVPSTEDLVN). Residues 1882–1902 (LLPAILSPGALVVGVVCAAIL) form a helical membrane-spanning segment. Residues 1903-1972 (RRHVGPGEGA…WINEDCSTPC (70 aa)) lie on the Cytoplasmic side of the membrane. S-palmitoyl cysteine; by host attachment occurs at residues Cys1968 and Cys1972. The stretch at 1973 to 2002 (SGSWLRDVWDWICTVLTDFKTWLQSKLLPR) is an intramembrane region. The Cytoplasmic portion of the chain corresponds to 2003–2989 (LPGVPFFSCQ…YHSLSRARPR (987 aa)). Cys2011, Cys2029, Cys2031, and Cys2052 together coordinate Zn(2+). The segment at 2120 to 2208 (EFFTEVDGVR…ASSSASQLSA (89 aa)) is FKBP8-binding. A transcriptional activation region spans residues 2120-2332 (EFFTEVDGVR…PIPPPRRKRT (213 aa)). Positions 2135 to 2139 (PACKP) are interaction with non-structural protein 4A. Residues 2189–2441 (RLARGSPPSL…PCAAEESKLP (253 aa)) are interaction with host SKP2. Residue Ser2194 is modified to Phosphoserine; by host; in p56. 5 positions are modified to phosphoserine; by host; in p58: Ser2197, Ser2201, Ser2204, Ser2207, and Ser2210. Residues 2210–2249 (SLKATCTTHHDSPDVDLIEANLLWRQEMGGNITRVESENK) are ISDR. Residues 2210-2275 (SLKATCTTHH…REPSVAAEIL (66 aa)) are interaction with EIF2AK2/PKR. The NS4B-binding stretch occupies residues 2249 to 2306 (KVVILDSFDPLRAEEDEREPSVAAEILRKTKRFPPAMPIWARPDYNPPLLESWKDPDY). Residues 2322-2325 (PPIP) carry the SH3-binding motif. A Nuclear localization signal motif is present at residues 2326–2334 (PPRRKRTVV). A Glycyl lysine isopeptide (Lys-Gly) (interchain with G-Cter in ubiquitin) cross-link involves residue Lys2350. Residues 2351-2365 (TFGSSGSSAVDSGTA) show a composition bias toward polar residues. The segment at 2351–2407 (TFGSSGSSAVDSGTATAPPDQASDDGDQGSDVESYSSMPPLEGEPGDPDLSDGSWST) is disordered. The segment at 2354 to 2377 (SSGSSAVDSGTATAPPDQASDDGD) is V3. Phosphoserine; by host occurs at positions 2448 and 2461. Residues 2633–2751 (PMGFSYDTRC…ICESAGTQED (119 aa)) form the RdRp catalytic domain. Mg(2+) contacts are provided by Asp2639, Asp2737, and Asp2738. Residues 2990-3010 (WFMLCLLLLSVGVGIYLLPNR) form a helical membrane-spanning segment.

It belongs to the hepacivirus polyprotein family. Homooligomer. Interacts with E1 (via C-terminus). Interacts with the non-structural protein 5A. Interacts (via N-terminus) with host STAT1 (via SH2 domain); this interaction results in decreased STAT1 phosphorylation and ubiquitin-mediated proteasome-dependent STAT1 degradation, leading to decreased IFN-stimulated gene transcription. Interacts with host STAT3; this interaction constitutively activates STAT3. Interacts with host LTBR receptor. Interacts with host TNFRSF1A receptor and possibly induces apoptosis. Interacts with host HNRPK. Interacts with host YWHAE. Interacts with host UBE3A/E6AP. Interacts with host DDX3X. Interacts with host APOA2. Interacts with host RXRA protein. Interacts with host SP110 isoform 3/Sp110b; this interaction sequesters the transcriptional corepressor SP110 away from the nucleus. Interacts with host CREB3 nuclear transcription protein; this interaction triggers cell transformation. Interacts with host ACY3. Interacts with host C1QR1. Interacts with host RBM24; this interaction, which enhances the interaction of the mature core protein with 5'-UTR, may inhibit viral translation and favor replication. Interacts with host EIF2AK2/PKR; this interaction induces the autophosphorylation of EIF2AK2. Part of the viral assembly initiation complex composed of NS2, E1, E2, NS3, NS4A, NS5A and the mature core protein. In terms of assembly, forms a heterodimer with envelope glycoprotein E2. Interacts with mature core protein. Interacts with protease NS2. The heterodimer E1/E2 interacts with host CLDN1; this interaction plays a role in viral entry into host cell. Interacts with host SPSB2 (via C-terminus). Part of the viral assembly initiation complex composed of NS2, E1, E2, NS3, NS4A, NS5A and the mature core protein. Interacts with host NEURL3; this interaction prevents E1 binding to glycoprotein E2. As to quaternary structure, forms a heterodimer with envelope glycoprotein E1. Interacts with host CD81 and SCARB1 receptors; these interactions play a role in viral entry into host cell. Interacts with host EIF2AK2/PKR; this interaction inhibits EIF2AK2 and probably allows the virus to evade the innate immune response. Interacts with host CD209/DC-SIGN and CLEC4M/DC-SIGNR. Interact with host SPCS1; this interaction is essential for viral particle assembly. Interacts with protease NS2. The heterodimer E1/E2 interacts with host CLDN1; this interaction plays a role in viral entry into host cell. Part of the viral assembly initiation complex composed of NS2, E1, E2, NS3, NS4A, NS5A and the mature core protein. Interacts with host SLC3A2/4F2hc; the interaction may facilitate viral entry into host cell. Interacts with human PLSCR1. Homohexamer. Homoheptamer. Interacts with protease NS2. In terms of assembly, homodimer. Interacts with host SPCS1; this interaction is essential for viral particle assembly. Interacts with envelope glycoprotein E1. Interacts with envelope glycoprotein E2. Interacts with viroporin p7. Interacts with serine protease/helicase NS3. Part of the replication complex composed of NS2, NS3, NS4A, NS4B, NS5A and the RNA-directed RNA polymerase embedded in an ER-derived membranous web. Part of the viral assembly initiation complex composed of NS2, E1, E2, NS3, NS4A, NS5A and the mature core protein. As to quaternary structure, interacts with protease NS2. Interacts with non-structural protein 4A; this interaction stabilizes the folding of NS3 serine protease. NS3-NS4A interaction is essential for NS3 activation and allows membrane anchorage of the latter. NS3/NS4A complex also prevents phosphorylation of host IRF3, thus preventing the establishment of dsRNA induced antiviral state. Interacts with host MAVS; this interaction leads to the cleavage and inhibition of host MAVS. Interacts with host TICAM1; this interaction leads to the cleavage and inhibition of host TICAM1. Interacts with host TANK-binding kinase/TBK1; this interaction results in the inhibition of the association between TBK1 and IRF3, which leads to the inhibition of IRF3 activation. Interacts with host RBM24. Part of the replication complex composed of NS2, NS3, NS4A, NS4B, NS5A and the RNA-directed RNA polymerase embedded in an ER-derived membranous web. Part of the viral assembly initiation complex composed of NS2, E1, E2, NS3, NS4A, NS5A and the mature core protein. Interacts with NS3 serine protease; this interaction stabilizes the folding of NS3 serine protease. NS3-NS4A interaction is essential for NS3 activation and allows membrane anchorage of the latter. Interacts with non-structural protein 5A (via N-terminus). Part of the replication complex composed of NS2, NS3, NS4A, NS4B, NS5A and the RNA-directed RNA polymerase embedded in an ER-derived membranous web. Part of the viral assembly initiation complex composed of NS2, E1, E2, NS3, NS4A, NS5A and the mature core protein. In terms of assembly, homomultimer. Interacts with non-structural protein NS5A. Interacts with host PLA2G4C; this interaction likely initiates the recruitment of replication complexes to lipid droplets. Interacts with host STING; this interaction disrupts the interaction between STING and TBK1 thereby suppressing the interferon signaling. Part of the replication complex composed of NS2, NS3, NS4A, NS4B, NS5A and the RNA-directed RNA polymerase embedded in an ER-derived membranous web. As to quaternary structure, monomer. Homodimer; dimerization is required for RNA-binding. Interacts with the mature core protein. Interacts (via N-terminus) with non-structural protein 4A. Interacts with non-structural protein 4B. Interacts (via region D2) with RNA-directed RNA polymerase. Part of the viral assembly initiation complex composed of NS2, E1, E2, NS3, NS4A, NS5A and the mature core protein. Part of the replication complex composed of NS2, NS3, NS4A, NS4B, NS5A and the RNA-directed RNA polymerase embedded in an ER-derived membranous web. Interacts with host GRB2. Interacts with host BIN1. Interacts with host PIK3R1. Interacts with host SRCAP. Interacts with host FKBP8. Interacts (via C-terminus) with host VAPB (via MSP domain). Interacts with host EIF2AK2/PKR; this interaction leads to disruption of EIF2AK2 dimerization by NS5A and probably allows the virus to evade the innate immune response. Interacts (via N-terminus) with host PACSIN2 (via N-terminus); this interaction attenuates protein kinase C alpha-mediated phosphorylation of PACSIN2 by disrupting the interaction between PACSIN2 and PRKCA. Interacts (via N-terminus) with host SRC kinase (via SH2 domain). Interacts with most Src-family kinases. Interacts with host IFI27 and SKP2; promotes the ubiquitin-mediated proteasomal degradation of NS5A. Interacts with host GPS2. Interacts with host TNFRSF21; this interaction allows the modulation by the virus of JNK, p38 MAPK, STAT3, and Akt signaling pathways in a DR6-dependent manner. Interacts (via N-terminus) with host CIDEB (via N-terminus); this interaction seems to regulate the association of HCV particles with APOE. Interacts with host CHKA/Choline Kinase-alpha; CHKA bridges host PI4KA and NS5A and potentiates NS5A-stimulated PI4KA activity, which then facilitates the targeting of the ternary complex to the ER for viral replication. Interacts with host SPSB2 (via C-terminus); this interaction targets NS5A for ubiquitination and degradation. Interacts with host RAB18; this interaction may promote the association of NS5A and other replicase components with lipid droplets. Interacts (via region D2) with host PPIA/CYPA; the interaction stimulates RNA-binding ability of NS5A and is dependent on the peptidyl-prolyl cis-trans isomerase activity of PPIA/CYPA. Interacts with host TRIM14; this interaction induces the degradation of NS5A. Homooligomer. Interacts with non-structural protein 5A. Interacts with host VAPB. Interacts with host PRK2/PKN2. Interacts with host HNRNPA1 and SEPT6; these interactions facilitate viral replication. Part of the replication complex composed of NS2, NS3, NS4A, NS4B, NS5A and the RNA-directed RNA polymerase. It depends on Zn(2+) as a cofactor. Requires Mg(2+) as cofactor. Specific enzymatic cleavages in vivo yield mature proteins. The structural proteins, core, E1, E2 and p7 are produced by proteolytic processing by host signal peptidases. The core protein precursor is synthesized as a 23 kDa, which is retained in the ER membrane through the hydrophobic signal peptide. Cleavage by the signal peptidase releases the 21 kDa mature core protein. The cleavage of the core protein precursor occurs between aminoacids 176 and 188 but the exact cleavage site is not known. Some degraded forms of the core protein appear as well during the course of infection. The other proteins (p7, NS2, NS3, NS4A, NS4B, NS5A and NS5B) are cleaved by the viral proteases. Autoprocessing between NS2 and NS3 is mediated by the NS2 cysteine protease catalytic domain and regulated by the NS3 N-terminal domain. In terms of processing, phosphorylated by host PKC and PKA. Post-translationally, ubiquitinated; mediated by UBE3A and leading to core protein subsequent proteasomal degradation. Highly N-glycosylated. In terms of processing, palmitoylation is required for NS2/3 autoprocessing and E2 recruitment to membranes. Post-translationally, palmitoylated. This modification may play a role in its polymerization or in protein-protein interactions. Phosphorylated on serines in a basal form termed p56. p58 is a hyperphosphorylated form of p56. p56 and p58 coexist in the cell in roughly equivalent amounts. Hyperphosphorylation is dependent on the presence of NS4A. Host CSNK1A1/CKI-alpha or RPS6KB1 kinases may be responsible for NS5A phosphorylation. In terms of processing, tyrosine phosphorylation is essential for the interaction with host SRC. Post-translationally, ubiquitinated. Ubiquitination, most probably at Lys-2350, mediated by host IFI27 and SKP2 leads to proteasomal degradation, restricting viral infection. Ubiquitination by host TRIM22 leads to interruption of viral replication. The N-terminus is phosphorylated by host PRK2/PKN2.

The protein resides in the host endoplasmic reticulum membrane. Its subcellular location is the host mitochondrion membrane. It is found in the virion. The protein localises to the host cytoplasm. It localises to the host nucleus. The protein resides in the host lipid droplet. Its subcellular location is the virion membrane. It is found in the host mitochondrion. The protein localises to the host cell membrane. It localises to the host perinuclear region. The catalysed reaction is Hydrolysis of four peptide bonds in the viral precursor polyprotein, commonly with Asp or Glu in the P6 position, Cys or Thr in P1 and Ser or Ala in P1'.. The enzyme catalyses a ribonucleoside 5'-triphosphate + H2O = a ribonucleoside 5'-diphosphate + phosphate + H(+). It carries out the reaction ATP + H2O = ADP + phosphate + H(+). It catalyses the reaction RNA(n) + a ribonucleoside 5'-triphosphate = RNA(n+1) + diphosphate. Its activity is regulated as follows. Inhibited by the antiviral drug hexamethylene amiloride. Inhibition by amantadine appears to be genotype-dependent. Also inhibited by long-alkyl-chain iminosugar derivatives. With respect to regulation, activity is up-regulated by PRK2/PKN2-mediated phosphorylation. Its function is as follows. Packages viral RNA to form a viral nucleocapsid, and promotes virion budding. Participates in the viral particle production as a result of its interaction with the non-structural protein 5A. Binds RNA and may function as a RNA chaperone to induce the RNA structural rearrangements taking place during virus replication. Modulates viral translation initiation by interacting with viral IRES and 40S ribosomal subunit. Affects various cell signaling pathways, host immunity and lipid metabolism. Prevents the establishment of cellular antiviral state by blocking the interferon-alpha/beta (IFN-alpha/beta) and IFN-gamma signaling pathways and by blocking the formation of phosphorylated STAT1 and promoting ubiquitin-mediated proteasome-dependent degradation of STAT1. Activates STAT3 leading to cellular transformation. Regulates the activity of cellular genes, including c-myc and c-fos. May repress the promoter of p53, and sequester CREB3 and SP110 isoform 3/Sp110b in the cytoplasm. Represses cell cycle negative regulating factor CDKN1A, thereby interrupting an important check point of normal cell cycle regulation. Targets transcription factors involved in the regulation of inflammatory responses and in the immune response: suppresses TNF-induced NF-kappa-B activation, and activates AP-1. Binds to dendritic cells (DCs) via C1QR1, resulting in down-regulation of T-lymphocytes proliferation. Alters lipid metabolism by interacting with hepatocellular proteins involved in lipid accumulation and storage. Induces up-regulation of FAS promoter activity, and thereby contributes to the increased triglyceride accumulation in hepatocytes (steatosis). Forms a heterodimer with envelope glycoprotein E2, which mediates virus attachment to the host cell, virion internalization through clathrin-dependent endocytosis and fusion with host membrane. Fusion with the host cell is most likely mediated by both E1 and E2, through conformational rearrangements of the heterodimer required for fusion rather than a classical class II fusion mechanism. E1/E2 heterodimer binds host apolipoproteins such as APOB and APOE thereby forming a lipo-viro-particle (LVP). APOE associated to the LVP allows the initial virus attachment to cell surface receptors such as the heparan sulfate proteoglycans (HSPGs), syndecan-1 (SDC1), syndecan-1 (SDC2), the low-density lipoprotein receptor (LDLR) and scavenger receptor class B type I (SCARB1). The cholesterol transfer activity of SCARB1 allows E2 exposure and binding of E2 to SCARB1 and the tetraspanin CD81. E1/E2 heterodimer binding on CD81 activates the epithelial growth factor receptor (EGFR) signaling pathway. Diffusion of the complex E1-E2-EGFR-SCARB1-CD81 to the cell lateral membrane allows further interaction with Claudin 1 (CLDN1) and occludin (OCLN) to finally trigger HCV entry. Functionally, forms a heterodimer with envelope glycoprotein E1, which mediates virus attachment to the host cell, virion internalization through clathrin-dependent endocytosis and fusion with host membrane. Fusion with the host cell is most likely mediated by both E1 and E2, through conformational rearrangements of the heterodimer required for fusion rather than a classical class II fusion mechanism. The interaction between envelope glycoprotein E2 and host apolipoprotein E/APOE allows the proper assembly, maturation and infectivity of the viral particles. This interaction is probably promoted via the up-regulation of cellular autophagy by the virus. E1/E2 heterodimer binds host apolipoproteins such as APOB and APOE thereby forming a lipo-viro-particle (LVP). APOE associated to the LVP allows the initial virus attachment to cell surface receptors such as the heparan sulfate proteoglycans (HSPGs), syndecan-1 (SDC1), syndecan-1 (SDC2), the low-density lipoprotein receptor (LDLR) and scavenger receptor class B type I (SCARB1). The cholesterol transfer activity of SCARB1 allows E2 exposure and binding of E2 to SCARB1 and the tetraspanin CD81. E1/E2 heterodimer binding on CD81 activates the epithelial growth factor receptor (EGFR) signaling pathway. Diffusion of the complex E1-E2-EGFR-SCARB1-CD81 to the cell lateral membrane allows further interaction with Claudin 1 (CLDN1) and occludin (OCLN) to finally trigger HCV entry. Inhibits host EIF2AK2/PKR activation, preventing the establishment of an antiviral state. Viral ligand for CD209/DC-SIGN and CLEC4M/DC-SIGNR, which are respectively found on dendritic cells (DCs), and on liver sinusoidal endothelial cells and macrophage-like cells of lymph node sinuses. These interactions allow the capture of circulating HCV particles by these cells and subsequent facilitated transmission to permissive cells such as hepatocytes and lymphocyte subpopulations. The interaction between E2 and host amino acid transporter complex formed by SLC3A2 and SLC7A5/LAT1 may facilitate viral entry into host cell. In terms of biological role, ion channel protein that acts as a viroporin and plays an essential role in the assembly, envelopment and secretion of viral particles. Regulates the host cell secretory pathway, which induces the intracellular retention of viral glycoproteins and favors assembly of viral particles. Creates a pore in acidic organelles and releases Ca(2+) and H(+) in the cytoplasm of infected cells, leading to a productive viral infection. High levels of cytoplasmic Ca(2+) may trigger membrane trafficking and transport of viral ER-associated proteins to viroplasms, sites of viral genome replication. This ionic imbalance induces the assembly of the inflammasome complex, which triggers the maturation of pro-IL-1beta into IL-1beta through the action of caspase-1. Targets also host mitochondria and induces mitochondrial depolarization. In addition of its role as a viroporin, acts as a lipid raft adhesion factor. Its function is as follows. Cysteine protease required for the proteolytic auto-cleavage between the non-structural proteins NS2 and NS3. The N-terminus of NS3 is required for the function of NS2 protease (active region NS2-3). Promotes the initiation of viral particle assembly by mediating the interaction between structural and non-structural proteins. Displays three enzymatic activities: serine protease with a chymotrypsin-like fold, NTPase and RNA helicase. NS3 serine protease, in association with NS4A, is responsible for the cleavages of NS3-NS4A, NS4A-NS4B, NS4B-NS5A and NS5A-NS5B. The NS3/NS4A complex prevents phosphorylation of host IRF3, thus preventing the establishment of dsRNA induced antiviral state. The NS3/NS4A complex induces host amino acid transporter component SLC3A2, thus contributing to HCV propagation. NS3 RNA helicase binds to RNA and unwinds both dsDNA and dsRNA in the 3' to 5' direction, and likely resolves RNA complicated stable secondary structures in the template strand. Binds a single ATP and catalyzes the unzipping of a single base pair of dsRNA. Inhibits host antiviral proteins TBK1 and IRF3 thereby preventing the establishment of an antiviral state. Cleaves host MAVS/CARDIF thereby preventing the establishment of an antiviral state. Cleaves host TICAM1/TRIF, thereby disrupting TLR3 signaling and preventing the establishment of an antiviral state. Functionally, peptide cofactor which forms a non-covalent complex with the N-terminal of NS3 serine protease. The NS3/NS4A complex prevents phosphorylation of host IRF3, thus preventing the establishment of dsRNA induced antiviral state. The NS3/NS4A complex induces host amino acid transporter component SLC3A2, thus contributing to HCV propagation. In terms of biological role, induces a specific membrane alteration that serves as a scaffold for the virus replication complex. This membrane alteration gives rise to the so-called ER-derived membranous web that contains the replication complex. NS4B self-interaction contributes to its function in membranous web formation. Promotes host TRIF protein degradation in a CASP8-dependent manner thereby inhibiting host TLR3-mediated interferon signaling. Disrupts the interaction between STING and TBK1 contributing to the inhibition of interferon signaling. Its function is as follows. Phosphorylated protein that is indispensable for viral replication and assembly. Both hypo- and hyperphosphorylated states are required for the viral life cycle. The hyperphosphorylated form of NS5A is an inhibitor of viral replication. Involved in RNA-binding and especially in binding to the viral genome. Zinc is essential for RNA-binding. Participates in the viral particle production as a result of its interaction with the mature viral core protein. Its interaction with host VAPB may target the viral replication complex to vesicles. Down-regulates viral IRES translation initiation. Mediates interferon resistance, presumably by interacting with and inhibiting host EIF2AK2/PKR. Prevents BIN1-induced apoptosis. Acts as a transcriptional activator of some host genes important for viral replication when localized in the nucleus. Via the interaction with host PACSIN2, modulates lipid droplet formation in order to promote virion assembly. Modulates TNFRSF21/DR6 signaling pathway for viral propagation. RNA-dependent RNA polymerase that performs primer-template recognition and RNA synthesis during viral replication. Initiates RNA transcription/replication at a flavin adenine dinucleotide (FAD), resulting in a 5'- FAD cap on viral RNAs. In this way, recognition of viral 5' RNA by host pattern recognition receptors can be bypassed, thereby evading activation of antiviral pathways. The chain is Genome polyprotein from Homo sapiens (Human).